The primary structure comprises 146 residues: Basic phospholipase A2 (146 aa).

Residues 1–21 (MYPAHLLVLLAVCVSLLGAAS) form the signal peptide. A propeptide spanning residues 22 to 27 (IPPLPL) is cleaved from the precursor. Intrachain disulfides connect C38/C98, C54/C145, C56/C72, C71/C126, C78/C119, C87/C112, and C105/C117. The Ca(2+) site is built by Y55, G57, and G59. Residue H75 is part of the active site. D76 contributes to the Ca(2+) binding site. D120 is an active-site residue.

Belongs to the phospholipase A2 family. Group I subfamily. D49 sub-subfamily. It depends on Ca(2+) as a cofactor. Expressed by the venom gland.

It is found in the secreted. The catalysed reaction is a 1,2-diacyl-sn-glycero-3-phosphocholine + H2O = a 1-acyl-sn-glycero-3-phosphocholine + a fatty acid + H(+). In terms of biological role, snake venom phospholipase A2 (PLA2) that inhibits neuromuscular transmission by blocking acetylcholine release from the nerve termini. PLA2 catalyzes the calcium-dependent hydrolysis of the 2-acyl groups in 3-sn-phosphoglycerides. This is Basic phospholipase A2 from Hydrophis hardwickii (Hardwick's spine-bellied seasnake).